A 341-amino-acid polypeptide reads, in one-letter code: Inactive caspase-12 (341 aa).

One can recognise a CARD domain in the interval 1–92; sequence MADEKPSNGV…QLSSDISSDG (92 aa). S85 and S90 each carry phosphoserine. Active-site residues include H172 and C220.

It belongs to the peptidase C14A family. As to expression, widely expressed, with highest levels in lung.

May function as a negative regulator of inflammatory responses and innate immunity. May reduce cytokine release in response to bacterial lipopolysaccharide during infection. Reduces activation of NF-kappa-B in response to TNF. May lack protease activity. This Homo sapiens (Human) protein is Inactive caspase-12 (CASP12).